Reading from the N-terminus, the 152-residue chain is MRKVKPARKLGRTAAHRKATLSNLSTQLLVYKRIETTEAKAKETRRVVEKIITKARKGTVHAQREIFKDIRDKQAIRILFEEIVAKVGTRQGGYTRVIKLAPRFGDAAKMAVIELVDYQEAPSASQKTGKQDRAKRVKGSKKTAEAAVSVAG.

Residues 121 to 140 (APSASQKTGKQDRAKRVKGS) are disordered.

Belongs to the bacterial ribosomal protein bL17 family. In terms of assembly, part of the 50S ribosomal subunit. Contacts protein L32.

This is Large ribosomal subunit protein bL17 from Pelodictyon phaeoclathratiforme (strain DSM 5477 / BU-1).